Consider the following 256-residue polypeptide: 2-C-methyl-D-erythritol 4-phosphate cytidylyltransferase (256 aa).

Belongs to the IspD/TarI cytidylyltransferase family. IspD subfamily.

The catalysed reaction is 2-C-methyl-D-erythritol 4-phosphate + CTP + H(+) = 4-CDP-2-C-methyl-D-erythritol + diphosphate. The protein operates within isoprenoid biosynthesis; isopentenyl diphosphate biosynthesis via DXP pathway; isopentenyl diphosphate from 1-deoxy-D-xylulose 5-phosphate: step 2/6. Its function is as follows. Catalyzes the formation of 4-diphosphocytidyl-2-C-methyl-D-erythritol from CTP and 2-C-methyl-D-erythritol 4-phosphate (MEP). In Corynebacterium glutamicum (strain ATCC 13032 / DSM 20300 / JCM 1318 / BCRC 11384 / CCUG 27702 / LMG 3730 / NBRC 12168 / NCIMB 10025 / NRRL B-2784 / 534), this protein is 2-C-methyl-D-erythritol 4-phosphate cytidylyltransferase.